Reading from the N-terminus, the 587-residue chain is Probable terpene synthase 12 (587 aa).

Positions 338, 342, and 489 each coordinate Mg(2+). The DDXXD motif signature appears at 338–342 (DDVYD).

Belongs to the terpene synthase family. Mg(2+) serves as cofactor.

Functionally, probable sesquiterpene synthase. The protein is Probable terpene synthase 12 (TPS12) of Ricinus communis (Castor bean).